We begin with the raw amino-acid sequence, 158 residues long: SsrA-binding protein (158 aa).

The disordered stretch occupies residues 132-158 (KKTHDKRETEKKRDWNREKARLMRDKG). Basic and acidic residues predominate over residues 136–158 (DKRETEKKRDWNREKARLMRDKG).

This sequence belongs to the SmpB family.

It localises to the cytoplasm. In terms of biological role, required for rescue of stalled ribosomes mediated by trans-translation. Binds to transfer-messenger RNA (tmRNA), required for stable association of tmRNA with ribosomes. tmRNA and SmpB together mimic tRNA shape, replacing the anticodon stem-loop with SmpB. tmRNA is encoded by the ssrA gene; the 2 termini fold to resemble tRNA(Ala) and it encodes a 'tag peptide', a short internal open reading frame. During trans-translation Ala-aminoacylated tmRNA acts like a tRNA, entering the A-site of stalled ribosomes, displacing the stalled mRNA. The ribosome then switches to translate the ORF on the tmRNA; the nascent peptide is terminated with the 'tag peptide' encoded by the tmRNA and targeted for degradation. The ribosome is freed to recommence translation, which seems to be the essential function of trans-translation. This chain is SsrA-binding protein, found in Brucella anthropi (strain ATCC 49188 / DSM 6882 / CCUG 24695 / JCM 21032 / LMG 3331 / NBRC 15819 / NCTC 12168 / Alc 37) (Ochrobactrum anthropi).